Reading from the N-terminus, the 223-residue chain is Ribonuclease 3 (223 aa).

An RNase III domain is found at 5–127 (LQRLEKKIGY…IIGAIYLDSD (123 aa)). Glu40 lines the Mg(2+) pocket. Asp44 is an active-site residue. Mg(2+) contacts are provided by Asp113 and Glu116. Glu116 is a catalytic residue. Residues 154 to 223 (DPKTRLQEYL…AADIALGQLN (70 aa)) enclose the DRBM domain.

This sequence belongs to the ribonuclease III family. In terms of assembly, homodimer. It depends on Mg(2+) as a cofactor.

The protein localises to the cytoplasm. It catalyses the reaction Endonucleolytic cleavage to 5'-phosphomonoester.. Digests double-stranded RNA. Involved in the processing of primary rRNA transcript to yield the immediate precursors to the large and small rRNAs (23S and 16S). Processes some mRNAs, and tRNAs when they are encoded in the rRNA operon. Processes pre-crRNA and tracrRNA of type II CRISPR loci if present in the organism. In Aliivibrio fischeri (strain ATCC 700601 / ES114) (Vibrio fischeri), this protein is Ribonuclease 3.